A 457-amino-acid polypeptide reads, in one-letter code: MDQDACTHSAALILAAGKGTRMCSNKPKVLHTLLGEPLLFHVISALRPLFGSNIWVVIGHGSSLIQSICSDLSLNFIYQEKQLGTANAVSIALPVLQQSRIKRLMVINGDMPLITSDLLECIIKKSDKTDFVFATLKLPLPNDYGRILRREGKIYSIIEAKDIEPSLQHDTTVEVNAGLYYFSLEVVDKCLPMIKNENKSQEYYFTDIIELAVENGYLVDSIYFEEDWHFLGVNTPKDLSYVESIQQAFIIEKLLQSGVIIHSPESVRISPFATIEPGVEIYGPCEIYGASYIASGSIIYSHSWIKNTTISHDVCIYSFCHLDTVIIKDKCSIGPYARLRPGCHLEEQVCIGNFVEIKKTQLGKHVKINHLSYIGDAIVGDESNIGAGTITCNYDGENKHHTFIGKKAFIGSNTALVAPLTIGEKSLIGAGSVIIRDVPENMVSIARGKQKNFSKRK.

The tract at residues 1–236 is pyrophosphorylase; the sequence is MDQDACTHSA…DWHFLGVNTP (236 aa). UDP-N-acetyl-alpha-D-glucosamine is bound by residues 14 to 17, Lys28, Gln79, and 84 to 85; these read LAAG and GT. Asp110 contributes to the Mg(2+) binding site. 4 residues coordinate UDP-N-acetyl-alpha-D-glucosamine: Gly145, Glu159, Asn176, and Asn234. Asn234 serves as a coordination point for Mg(2+). Positions 237-257 are linker; it reads KDLSYVESIQQAFIIEKLLQS. The N-acetyltransferase stretch occupies residues 258–457; the sequence is GVIIHSPESV…GKQKNFSKRK (200 aa). UDP-N-acetyl-alpha-D-glucosamine is bound by residues Arg340 and Lys358. Residue His370 is the Proton acceptor of the active site. The UDP-N-acetyl-alpha-D-glucosamine site is built by Tyr373 and Asn384. Residues Ala387, 393 to 394, Ser412, Ala430, and Arg447 each bind acetyl-CoA; that span reads NY.

This sequence in the N-terminal section; belongs to the N-acetylglucosamine-1-phosphate uridyltransferase family. It in the C-terminal section; belongs to the transferase hexapeptide repeat family. As to quaternary structure, homotrimer. Mg(2+) serves as cofactor.

The protein resides in the cytoplasm. It catalyses the reaction alpha-D-glucosamine 1-phosphate + acetyl-CoA = N-acetyl-alpha-D-glucosamine 1-phosphate + CoA + H(+). The catalysed reaction is N-acetyl-alpha-D-glucosamine 1-phosphate + UTP + H(+) = UDP-N-acetyl-alpha-D-glucosamine + diphosphate. It participates in nucleotide-sugar biosynthesis; UDP-N-acetyl-alpha-D-glucosamine biosynthesis; N-acetyl-alpha-D-glucosamine 1-phosphate from alpha-D-glucosamine 6-phosphate (route II): step 2/2. It functions in the pathway nucleotide-sugar biosynthesis; UDP-N-acetyl-alpha-D-glucosamine biosynthesis; UDP-N-acetyl-alpha-D-glucosamine from N-acetyl-alpha-D-glucosamine 1-phosphate: step 1/1. Its pathway is bacterial outer membrane biogenesis; LPS lipid A biosynthesis. Functionally, catalyzes the last two sequential reactions in the de novo biosynthetic pathway for UDP-N-acetylglucosamine (UDP-GlcNAc). The C-terminal domain catalyzes the transfer of acetyl group from acetyl coenzyme A to glucosamine-1-phosphate (GlcN-1-P) to produce N-acetylglucosamine-1-phosphate (GlcNAc-1-P), which is converted into UDP-GlcNAc by the transfer of uridine 5-monophosphate (from uridine 5-triphosphate), a reaction catalyzed by the N-terminal domain. This Lawsonia intracellularis (strain PHE/MN1-00) protein is Bifunctional protein GlmU.